The chain runs to 218 residues: Small ribosomal subunit protein uS3c (218 aa).

The KH type-2 domain maps to 47–118 (VQKNLKISSG…KLNITITRIA (72 aa)).

It belongs to the universal ribosomal protein uS3 family. In terms of assembly, part of the 30S ribosomal subunit.

It is found in the plastid. It localises to the chloroplast. In Daucus carota (Wild carrot), this protein is Small ribosomal subunit protein uS3c (rps3).